The primary structure comprises 232 residues: Large ribosomal subunit protein uL1 (232 aa).

The protein belongs to the universal ribosomal protein uL1 family. As to quaternary structure, part of the 50S ribosomal subunit.

Functionally, binds directly to 23S rRNA. The L1 stalk is quite mobile in the ribosome, and is involved in E site tRNA release. In terms of biological role, protein L1 is also a translational repressor protein, it controls the translation of the L11 operon by binding to its mRNA. This is Large ribosomal subunit protein uL1 from Burkholderia vietnamiensis (strain G4 / LMG 22486) (Burkholderia cepacia (strain R1808)).